Consider the following 337-residue polypeptide: F420-dependent glucose-6-phosphate dehydrogenase (337 aa).

Asp40 lines the coenzyme F420-(gamma-Glu)n pocket. The active-site Proton donor is the His41. Residues Thr77 and 108-109 (TG) each bind coenzyme F420-(gamma-Glu)n. Catalysis depends on Glu110, which acts as the Proton acceptor. Residues Asn113, 178-179 (GG), and 181-182 (VV) contribute to the coenzyme F420-(gamma-Glu)n site. The substrate site is built by Thr196, Lys199, Lys260, and Arg284.

The protein belongs to the F420-dependent glucose-6-phosphate dehydrogenase family. Homodimer.

The enzyme catalyses oxidized coenzyme F420-(gamma-L-Glu)(n) + D-glucose 6-phosphate + H(+) = 6-phospho-D-glucono-1,5-lactone + reduced coenzyme F420-(gamma-L-Glu)(n). Its function is as follows. Catalyzes the coenzyme F420-dependent oxidation of glucose 6-phosphate (G6P) to 6-phosphogluconolactone. In Rhodococcus hoagii (strain 103S) (Rhodococcus equi), this protein is F420-dependent glucose-6-phosphate dehydrogenase.